The following is a 117-amino-acid chain: S-adenosylmethionine decarboxylase proenzyme (117 aa).

The active-site Schiff-base intermediate with substrate; via pyruvic acid is Ser63. Ser63 carries the post-translational modification Pyruvic acid (Ser); by autocatalysis. The active-site Proton acceptor; for processing activity is the His68. The Proton donor; for catalytic activity role is filled by Cys83.

The protein belongs to the prokaryotic AdoMetDC family. Type 1 subfamily. Heterotetramer of two alpha and two beta chains arranged as a dimer of alpha/beta heterodimers. Pyruvate is required as a cofactor. In terms of processing, is synthesized initially as an inactive proenzyme. Formation of the active enzyme involves a self-maturation process in which the active site pyruvoyl group is generated from an internal serine residue via an autocatalytic post-translational modification. Two non-identical subunits are generated from the proenzyme in this reaction, and the pyruvate is formed at the N-terminus of the alpha chain, which is derived from the carboxyl end of the proenzyme. The post-translation cleavage follows an unusual pathway, termed non-hydrolytic serinolysis, in which the side chain hydroxyl group of the serine supplies its oxygen atom to form the C-terminus of the beta chain, while the remainder of the serine residue undergoes an oxidative deamination to produce ammonia and the pyruvoyl group blocking the N-terminus of the alpha chain.

It catalyses the reaction S-adenosyl-L-methionine + H(+) = S-adenosyl 3-(methylsulfanyl)propylamine + CO2. The protein operates within amine and polyamine biosynthesis; S-adenosylmethioninamine biosynthesis; S-adenosylmethioninamine from S-adenosyl-L-methionine: step 1/1. Catalyzes the decarboxylation of S-adenosylmethionine to S-adenosylmethioninamine (dcAdoMet), the propylamine donor required for the synthesis of the polyamines spermine and spermidine from the diamine putrescine. The chain is S-adenosylmethionine decarboxylase proenzyme from Methanococcus aeolicus (strain ATCC BAA-1280 / DSM 17508 / OCM 812 / Nankai-3).